Reading from the N-terminus, the 555-residue chain is Chaperonin GroEL (555 aa).

ATP contacts are provided by residues 29-32, lysine 50, 86-90, glycine 418, and aspartate 499; these read TLGP and DGTTT. The disordered stretch occupies residues 528 to 555; it reads HEEDNNTGNRSGGGVGGGHHGGMGGMDF. Residues 537–555 are compositionally biased toward gly residues; the sequence is RSGGGVGGGHHGGMGGMDF.

The protein belongs to the chaperonin (HSP60) family. As to quaternary structure, forms a cylinder of 14 subunits composed of two heptameric rings stacked back-to-back. Interacts with the co-chaperonin GroES.

The protein localises to the cytoplasm. It carries out the reaction ATP + H2O + a folded polypeptide = ADP + phosphate + an unfolded polypeptide.. Its function is as follows. Together with its co-chaperonin GroES, plays an essential role in assisting protein folding. The GroEL-GroES system forms a nano-cage that allows encapsulation of the non-native substrate proteins and provides a physical environment optimized to promote and accelerate protein folding. This is Chaperonin GroEL from Orientia tsutsugamushi (Rickettsia tsutsugamushi).